Reading from the N-terminus, the 290-residue chain is Light-independent protochlorophyllide reductase iron-sulfur ATP-binding protein (290 aa).

Residues 10–15 (GIGKST) and Lys39 contribute to the ATP site. Ser14 contributes to the Mg(2+) binding site. Residues Cys95 and Cys129 each coordinate [4Fe-4S] cluster. Residue 180–181 (NR) coordinates ATP.

Belongs to the NifH/BchL/ChlL family. In terms of assembly, homodimer. Protochlorophyllide reductase is composed of three subunits; ChlL, ChlN and ChlB. It depends on [4Fe-4S] cluster as a cofactor.

The protein resides in the plastid. The protein localises to the chloroplast. It carries out the reaction chlorophyllide a + oxidized 2[4Fe-4S]-[ferredoxin] + 2 ADP + 2 phosphate = protochlorophyllide a + reduced 2[4Fe-4S]-[ferredoxin] + 2 ATP + 2 H2O. Its pathway is porphyrin-containing compound metabolism; chlorophyll biosynthesis (light-independent). Its function is as follows. Component of the dark-operative protochlorophyllide reductase (DPOR) that uses Mg-ATP and reduced ferredoxin to reduce ring D of protochlorophyllide (Pchlide) to form chlorophyllide a (Chlide). This reaction is light-independent. The L component serves as a unique electron donor to the NB-component of the complex, and binds Mg-ATP. The chain is Light-independent protochlorophyllide reductase iron-sulfur ATP-binding protein from Porphyra purpurea (Red seaweed).